A 474-amino-acid chain; its full sequence is Pleckstrin homology domain-containing family S member 1 (474 aa).

The region spanning 20–135 (EVHKRDYFIK…WVSFMTPYCQ (116 aa)) is the PH domain. 3 disordered regions span residues 232–251 (IAGP…DQGF), 272–321 (STSA…DDQK), and 449–474 (RDLP…AAGE). The span at 238 to 248 (SGDSIESNSPD) shows a compositional bias: polar residues. Residues 449-458 (RDLPELERTP) are compositionally biased toward basic and acidic residues.

This is Pleckstrin homology domain-containing family S member 1 from Mus musculus (Mouse).